We begin with the raw amino-acid sequence, 1402 residues long: DNA-directed RNA polymerase subunit beta' (1402 aa).

Cysteine 71, cysteine 73, cysteine 86, and cysteine 89 together coordinate Zn(2+). Aspartate 462, aspartate 464, and aspartate 466 together coordinate Mg(2+). Residues cysteine 811, cysteine 885, cysteine 892, and cysteine 895 each contribute to the Zn(2+) site.

Belongs to the RNA polymerase beta' chain family. As to quaternary structure, the RNAP catalytic core consists of 2 alpha, 1 beta, 1 beta' and 1 omega subunit. When a sigma factor is associated with the core the holoenzyme is formed, which can initiate transcription. Mg(2+) is required as a cofactor. The cofactor is Zn(2+).

The enzyme catalyses RNA(n) + a ribonucleoside 5'-triphosphate = RNA(n+1) + diphosphate. In terms of biological role, DNA-dependent RNA polymerase catalyzes the transcription of DNA into RNA using the four ribonucleoside triphosphates as substrates. This chain is DNA-directed RNA polymerase subunit beta', found in Rhizobium johnstonii (strain DSM 114642 / LMG 32736 / 3841) (Rhizobium leguminosarum bv. viciae).